Here is a 131-residue protein sequence, read N- to C-terminus: Insulin-like 3 (131 aa).

The first 26 residues, 1 to 26, serve as a signal peptide directing secretion; sequence MDPHPLTWALVLLGPALALSRAPAPA. Intrachain disulfides connect Cys-34–Cys-116, Cys-46–Cys-129, and Cys-115–Cys-120. A propeptide spans 58–103 (c peptide like); it reads AVAGGDRELLQWLEGQHLFHGLMASGDPMLVLAPQPPPQASGHHHH.

This sequence belongs to the insulin family. In terms of assembly, heterodimer of a B chain and an A chain linked by two disulfide bonds. In terms of tissue distribution, expressed exclusively in prenatal and postnatal Leydig cells.

The protein localises to the secreted. Functionally, seems to play a role in testicular function. May be a trophic hormone with a role in testicular descent in fetal life. Is a ligand for LGR8 receptor. The polypeptide is Insulin-like 3 (INSL3) (Sus scrofa (Pig)).